A 142-amino-acid polypeptide reads, in one-letter code: Large ribosomal subunit protein bL19 (142 aa).

This sequence belongs to the bacterial ribosomal protein bL19 family.

This protein is located at the 30S-50S ribosomal subunit interface and may play a role in the structure and function of the aminoacyl-tRNA binding site. The polypeptide is Large ribosomal subunit protein bL19 (Rickettsia bellii (strain OSU 85-389)).